The sequence spans 392 residues: tRNA (guanine-N(7)-)-methyltransferase (392 aa).

S-adenosyl-L-methionine-binding residues include Glu-123, Glu-148, and Asp-175. Positions 201 and 231 each coordinate substrate.

This sequence belongs to the class I-like SAM-binding methyltransferase superfamily. TrmB family.

The catalysed reaction is guanosine(46) in tRNA + S-adenosyl-L-methionine = N(7)-methylguanosine(46) in tRNA + S-adenosyl-L-homocysteine. Its pathway is tRNA modification; N(7)-methylguanine-tRNA biosynthesis. Functionally, catalyzes the formation of N(7)-methylguanine at position 46 (m7G46) in tRNA. The protein is tRNA (guanine-N(7)-)-methyltransferase of Campylobacter jejuni subsp. doylei (strain ATCC BAA-1458 / RM4099 / 269.97).